Reading from the N-terminus, the 184-residue chain is Peptidyl-tRNA hydrolase (184 aa).

Tyrosine 14 contributes to the tRNA binding site. Histidine 19 functions as the Proton acceptor in the catalytic mechanism. Residues phenylalanine 64, asparagine 66, and asparagine 112 each coordinate tRNA.

Belongs to the PTH family. In terms of assembly, monomer.

It is found in the cytoplasm. It carries out the reaction an N-acyl-L-alpha-aminoacyl-tRNA + H2O = an N-acyl-L-amino acid + a tRNA + H(+). Its function is as follows. Hydrolyzes ribosome-free peptidyl-tRNAs (with 1 or more amino acids incorporated), which drop off the ribosome during protein synthesis, or as a result of ribosome stalling. In terms of biological role, catalyzes the release of premature peptidyl moieties from peptidyl-tRNA molecules trapped in stalled 50S ribosomal subunits, and thus maintains levels of free tRNAs and 50S ribosomes. The protein is Peptidyl-tRNA hydrolase of Listeria welshimeri serovar 6b (strain ATCC 35897 / DSM 20650 / CCUG 15529 / CIP 8149 / NCTC 11857 / SLCC 5334 / V8).